Here is a 490-residue protein sequence, read N- to C-terminus: Dual specificity protein kinase CLK3 (490 aa).

Residue tyrosine 7 is modified to Phosphotyrosine. Residues serine 9, serine 49, serine 51, serine 67, serine 76, and serine 78 each carry the phosphoserine modification. The disordered stretch occupies residues 22–138; that stretch reads RRRSYSREHE…SKRSSRSVED (117 aa). 2 stretches are compositionally biased toward basic and acidic residues: residues 26 to 56 and 63 to 76; these read YSRE…DRLP and EHRD…EDRS. The segment covering 103–116 has biased composition (basic residues); sequence TRKHAHHCHKRRTR. The segment covering 117-130 has biased composition (low complexity); that stretch reads SCSSASSRSQQSSK. A Phosphoserine modification is found at serine 135. The Protein kinase domain maps to 156 to 472; it reads YEIVGNLGEG…LAEALLHPFF (317 aa). Residues 162–170 and lysine 186 contribute to the ATP site; that span reads LGEGTFGKV. Residue aspartate 283 is the Proton acceptor of the active site.

The protein belongs to the protein kinase superfamily. CMGC Ser/Thr protein kinase family. Lammer subfamily. In terms of processing, autophosphorylates on all three types of residues.

It localises to the nucleus. Its subcellular location is the cytoplasm. The protein resides in the cytoplasmic vesicle. It is found in the secretory vesicle. The protein localises to the acrosome. It catalyses the reaction L-seryl-[protein] + ATP = O-phospho-L-seryl-[protein] + ADP + H(+). The enzyme catalyses L-threonyl-[protein] + ATP = O-phospho-L-threonyl-[protein] + ADP + H(+). It carries out the reaction L-tyrosyl-[protein] + ATP = O-phospho-L-tyrosyl-[protein] + ADP + H(+). With respect to regulation, leucettine L41 inhibits its kinase activity and affects the regulation of alternative splicing mediated by phosphorylation of SR proteins. Dual specificity kinase acting on both serine/threonine and tyrosine-containing substrates. Phosphorylates serine- and arginine-rich (SR) proteins of the spliceosomal complex. May be a constituent of a network of regulatory mechanisms that enable SR proteins to control RNA splicing and can cause redistribution of SR proteins from speckles to a diffuse nucleoplasmic distribution. Phosphorylates SRSF1 and SRSF3. Regulates the alternative splicing of tissue factor (F3) pre-mRNA in endothelial cells. This chain is Dual specificity protein kinase CLK3 (CLK3), found in Bos taurus (Bovine).